The sequence spans 274 residues: uncharacterized protein (274 aa).

Over residues 1–20 (MSLEKSLDEIINERTNGFDH) the composition is skewed to basic and acidic residues. 3 disordered regions span residues 1 to 63 (MSLE…HDLD), 148 to 217 (NLKG…EDLD), and 230 to 274 (ASTV…MEAV). A compositionally biased stretch (basic residues) spans 21 to 44 (KHSRRRGSQNRISKKSRLTYKFKR). Residues 45–63 (ASKEHNSSPDDGPWQHDLD) show a composition bias toward basic and acidic residues. One can recognise an RRM domain in the interval 85 to 161 (FGVRVENLHY…SEIQISKKSP (77 aa)). The span at 148–160 (NLKGSEIQISKKS) shows a compositional bias: polar residues. 2 stretches are compositionally biased toward low complexity: residues 181–190 (SSRSNRGFNR) and 200–211 (RSSSKKSSNNSI). A compositionally biased stretch (polar residues) spans 230 to 245 (ASTVSSHSSQDFTPSI). Residues 263–274 (LTEEMDLQMEAV) are compositionally biased toward acidic residues.

This is an uncharacterized protein from Schizosaccharomyces pombe (strain 972 / ATCC 24843) (Fission yeast).